The primary structure comprises 118 residues: Large ribosomal subunit protein bL20 (118 aa).

This sequence belongs to the bacterial ribosomal protein bL20 family.

Its function is as follows. Binds directly to 23S ribosomal RNA and is necessary for the in vitro assembly process of the 50S ribosomal subunit. It is not involved in the protein synthesizing functions of that subunit. The polypeptide is Large ribosomal subunit protein bL20 (Salmonella arizonae (strain ATCC BAA-731 / CDC346-86 / RSK2980)).